The sequence spans 310 residues: L-lactate dehydrogenase (310 aa).

NAD(+) is bound by residues Val17, Asp38, Lys43, Tyr69, and 83–84 (GA). Residues Gln86 and Arg92 each coordinate substrate. NAD(+)-binding positions include Ser105, 122–124 (ATN), and Ser147. Residue 124–127 (NPVD) participates in substrate binding. A substrate-binding site is contributed by 152 to 155 (DTAR). The beta-D-fructose 1,6-bisphosphate site is built by Arg157 and His172. The Proton acceptor role is filled by His179. Position 218 is a phosphotyrosine (Tyr218). Thr227 is a binding site for substrate.

The protein belongs to the LDH/MDH superfamily. LDH family. As to quaternary structure, homotetramer.

Its subcellular location is the cytoplasm. It catalyses the reaction (S)-lactate + NAD(+) = pyruvate + NADH + H(+). The protein operates within fermentation; pyruvate fermentation to lactate; (S)-lactate from pyruvate: step 1/1. Allosterically activated by fructose 1,6-bisphosphate (FBP). Functionally, catalyzes the conversion of lactate to pyruvate. This Halalkalibacterium halodurans (strain ATCC BAA-125 / DSM 18197 / FERM 7344 / JCM 9153 / C-125) (Bacillus halodurans) protein is L-lactate dehydrogenase.